Consider the following 183-residue polypeptide: Pectinesterase inhibitor 8 (183 aa).

An N-terminal signal peptide occupies residues 1–30 (MAQRASRRPAAAAAAVVVAVVLAVSGGVGA). 2 disulfides stabilise this stretch: C36/C51 and C107/C147.

Belongs to the PMEI family.

It is found in the secreted. The protein localises to the extracellular space. The protein resides in the apoplast. In terms of biological role, pectin methylesterase (PME) inhibitor that inhibits PME in vitro. In Oryza sativa subsp. japonica (Rice), this protein is Pectinesterase inhibitor 8.